The following is an 843-amino-acid chain: Protein translocase subunit SecA 1 (843 aa).

ATP-binding positions include glutamine 91, 109 to 113 (GEGKT), and aspartate 498. Basic and acidic residues predominate over residues 799–813 (EAKHVSAEDGKEKVK). The tract at residues 799-826 (EAKHVSAEDGKEKVKPKPIVKGDQVGRN) is disordered. Residues cysteine 829, cysteine 831, cysteine 840, and histidine 841 each contribute to the Zn(2+) site.

Belongs to the SecA family. In terms of assembly, monomer and homodimer. Part of the essential Sec protein translocation apparatus which comprises SecA, SecYEG and auxiliary proteins SecDF. Other proteins may also be involved. The cofactor is Zn(2+).

The protein localises to the cell membrane. It localises to the cytoplasm. It catalyses the reaction ATP + H2O + cellular proteinSide 1 = ADP + phosphate + cellular proteinSide 2.. Part of the Sec protein translocase complex. Interacts with the SecYEG preprotein conducting channel. Has a central role in coupling the hydrolysis of ATP to the transfer of proteins into and across the cell membrane, serving as an ATP-driven molecular motor driving the stepwise translocation of polypeptide chains across the membrane. This is Protein translocase subunit SecA 1 from Staphylococcus aureus (strain MRSA252).